Here is a 317-residue protein sequence, read N- to C-terminus: Probable cell division protein WhiA (317 aa).

Residues threonine 281–glycine 314 constitute a DNA-binding region (H-T-H motif).

The protein belongs to the WhiA family.

Functionally, involved in cell division and chromosome segregation. The protein is Probable cell division protein WhiA of Alkaliphilus metalliredigens (strain QYMF).